Consider the following 194-residue polypeptide: CD-NTase-associated protein 15 (194 aa).

Residues methionine 1–aspartate 73 are required for cell toxicity. A run of 2 helical transmembrane segments spans residues isoleucine 15 to valine 35 and isoleucine 43 to isoleucine 63.

The protein belongs to the CBASS Cap15 membrane effector family. The beta barrel domain oligomerizes; in the presence of cyclic nucleotides (probably 3',3'-cGAMP, but the cognate CD-NTase makes at least 4 other cyclic nucleotides) higher-level oligomers are detected.

It localises to the cell inner membrane. Functionally, effector protein of a CBASS antivirus system. CBASS (cyclic oligonucleotide-based antiphage signaling system) provides immunity against bacteriophages. The CD-NTase protein (CdnB) synthesizes cyclic nucleotides in response to infection; these serve as specific second messenger signals. The signals activate a diverse range of effectors, leading to bacterial cell death and thus abortive phage infection. Causes cell death in response to 3',3'-cGAMP upon coexpression in E.coli with V.cholerae DncV; inactivating DncV prevents cell death. Upon induction in E.coli with non-cognate DncV, the cell inner membrane shrinks and separates from the cell wall with a concomitant increase in the periplasm. Binds cyclic nucleotide second messenger 3',3'-cGAMP, probably oligomerizing, and induces cell membrane shrinkage and rupture, leading to cell death. A type I CBASS system. Protects E.coli against phage infection. When the CBASS operon (cdnB-cap15) is introduced in E.coli MG1655 there is about 100-fold protection against phage T2 and about 10-fold protection against phage T5 and T6. This Escherichia albertii protein is CD-NTase-associated protein 15.